The chain runs to 183 residues: MHSISIVGRRYALALMEVAVDQNIVGQVMADFELIEQTMVEAKQLRLAIQSPLIQAYKKAALLKEVFGGKVSQQVATFLFLLASKNRAEYLPEVIQEYRALLDEQNGVISVDIKTAVDLDDKQTKQLKDKLEAYTSKKVRVHLATDKQLIGGLTIQIGDTVLDGSIRHQLAMLKNNLAAGALN.

The protein belongs to the ATPase delta chain family. As to quaternary structure, F-type ATPases have 2 components, F(1) - the catalytic core - and F(0) - the membrane proton channel. F(1) has five subunits: alpha(3), beta(3), gamma(1), delta(1), epsilon(1). F(0) has three main subunits: a(1), b(2) and c(10-14). The alpha and beta chains form an alternating ring which encloses part of the gamma chain. F(1) is attached to F(0) by a central stalk formed by the gamma and epsilon chains, while a peripheral stalk is formed by the delta and b chains.

It localises to the cell inner membrane. Functionally, f(1)F(0) ATP synthase produces ATP from ADP in the presence of a proton or sodium gradient. F-type ATPases consist of two structural domains, F(1) containing the extramembraneous catalytic core and F(0) containing the membrane proton channel, linked together by a central stalk and a peripheral stalk. During catalysis, ATP synthesis in the catalytic domain of F(1) is coupled via a rotary mechanism of the central stalk subunits to proton translocation. Its function is as follows. This protein is part of the stalk that links CF(0) to CF(1). It either transmits conformational changes from CF(0) to CF(1) or is implicated in proton conduction. The chain is ATP synthase subunit delta from Chloroherpeton thalassium (strain ATCC 35110 / GB-78).